A 132-amino-acid polypeptide reads, in one-letter code: Small ribosomal subunit protein uS9 (132 aa).

The protein belongs to the universal ribosomal protein uS9 family.

This Blochmanniella pennsylvanica (strain BPEN) protein is Small ribosomal subunit protein uS9.